We begin with the raw amino-acid sequence, 156 residues long: ATP synthase subunit b (156 aa).

A helical membrane pass occupies residues 7–27 (LFAQMIVFFVLWWVVARFVWP).

The protein belongs to the ATPase B chain family. As to quaternary structure, F-type ATPases have 2 components, F(1) - the catalytic core - and F(0) - the membrane proton channel. F(1) has five subunits: alpha(3), beta(3), gamma(1), delta(1), epsilon(1). F(0) has three main subunits: a(1), b(2) and c(10-14). The alpha and beta chains form an alternating ring which encloses part of the gamma chain. F(1) is attached to F(0) by a central stalk formed by the gamma and epsilon chains, while a peripheral stalk is formed by the delta and b chains.

It localises to the cell inner membrane. F(1)F(0) ATP synthase produces ATP from ADP in the presence of a proton or sodium gradient. F-type ATPases consist of two structural domains, F(1) containing the extramembraneous catalytic core and F(0) containing the membrane proton channel, linked together by a central stalk and a peripheral stalk. During catalysis, ATP synthesis in the catalytic domain of F(1) is coupled via a rotary mechanism of the central stalk subunits to proton translocation. Functionally, component of the F(0) channel, it forms part of the peripheral stalk, linking F(1) to F(0). This is ATP synthase subunit b from Polynucleobacter necessarius subsp. necessarius (strain STIR1).